Consider the following 191-residue polypeptide: Negative modulator of initiation of replication (191 aa).

The interval 96–97 (AV) is interaction with DNA.

The protein belongs to the SeqA family. Homodimer. Polymerizes to form helical filaments.

The protein resides in the cytoplasm. Functionally, negative regulator of replication initiation, which contributes to regulation of DNA replication and ensures that replication initiation occurs exactly once per chromosome per cell cycle. Binds to pairs of hemimethylated GATC sequences in the oriC region, thus preventing assembly of replication proteins and re-initiation at newly replicated origins. Repression is relieved when the region becomes fully methylated. This is Negative modulator of initiation of replication from Shewanella amazonensis (strain ATCC BAA-1098 / SB2B).